We begin with the raw amino-acid sequence, 460 residues long: Elongation factor 1-alpha (460 aa).

At G2 the chain carries N,N,N-trimethylglycine. N6,N6-dimethyllysine; alternate is present on K3. K3 is modified (N6-methyllysine; alternate). In terms of domain architecture, tr-type G spans 5-240 (KLHVNVVVIG…DAIEPPVRPS (236 aa)). Residues 14–21 (GHVDSGKS) form a G1 region. 14-21 (GHVDSGKS) contacts GTP. Position 30 is an N6-methyllysine (K30). Positions 70–74 (GITID) are G2. An N6,N6,N6-trimethyllysine modification is found at K79. The segment at 91 to 94 (DAPG) is G3. Residues 91-95 (DAPGH) and 153-156 (NKMD) contribute to the GTP site. The tract at residues 153–156 (NKMD) is G4. The tract at residues 192 to 194 (SGW) is G5. An N6,N6-dimethyllysine; alternate modification is found at K316. K316 carries the N6-methyllysine; alternate modification. An N6-methyllysine modification is found at K390.

The protein belongs to the TRAFAC class translation factor GTPase superfamily. Classic translation factor GTPase family. EF-Tu/EF-1A subfamily.

The protein localises to the cytoplasm. In terms of biological role, this protein promotes the GTP-dependent binding of aminoacyl-tRNA to the A-site of ribosomes during protein biosynthesis. The chain is Elongation factor 1-alpha (TEF1) from Schizophyllum commune (Split gill fungus).